The primary structure comprises 83 residues: Bowman-Birk type seed trypsin and chymotrypsin inhibitor (83 aa).

Disulfide bonds link Cys-18-Cys-72, Cys-19-Cys-34, Cys-22-Cys-68, Cys-24-Cys-32, Cys-42-Cys-49, Cys-46-Cys-61, and Cys-51-Cys-59.

This sequence belongs to the Bowman-Birk serine protease inhibitor family.

In Vigna unguiculata (Cowpea), this protein is Bowman-Birk type seed trypsin and chymotrypsin inhibitor.